Here is a 197-residue protein sequence, read N- to C-terminus: Imidazoleglycerol-phosphate dehydratase (197 aa).

Belongs to the imidazoleglycerol-phosphate dehydratase family.

Its subcellular location is the cytoplasm. The catalysed reaction is D-erythro-1-(imidazol-4-yl)glycerol 3-phosphate = 3-(imidazol-4-yl)-2-oxopropyl phosphate + H2O. It participates in amino-acid biosynthesis; L-histidine biosynthesis; L-histidine from 5-phospho-alpha-D-ribose 1-diphosphate: step 6/9. This chain is Imidazoleglycerol-phosphate dehydratase (hisB), found in Streptomyces coelicolor (strain ATCC BAA-471 / A3(2) / M145).